We begin with the raw amino-acid sequence, 133 residues long: Peptide methionine sulfoxide reductase MsrB (133 aa).

Residues 1-12 (MSEKVQKSEHEW) are compositionally biased toward basic and acidic residues. The disordered stretch occupies residues 1-36 (MSEKVQKSEHEWQQQLTPEQYRVTREKGTERPFTGD). Positions 9-132 (EHEWQQQLTP…NSVSLDFHPG (124 aa)) constitute a MsrB domain. 4 residues coordinate Zn(2+): Cys-48, Cys-51, Cys-97, and Cys-100. Residue Cys-121 is the Nucleophile of the active site.

The protein belongs to the MsrB Met sulfoxide reductase family. Zn(2+) is required as a cofactor.

The catalysed reaction is L-methionyl-[protein] + [thioredoxin]-disulfide + H2O = L-methionyl-(R)-S-oxide-[protein] + [thioredoxin]-dithiol. This Chromohalobacter salexigens (strain ATCC BAA-138 / DSM 3043 / CIP 106854 / NCIMB 13768 / 1H11) protein is Peptide methionine sulfoxide reductase MsrB.